A 519-amino-acid polypeptide reads, in one-letter code: MPSESSVSIYKLDQLEYQYHYLTKSLQKFEPRYPKTAKLYNCIGKKNKKKIEKLLNSLELKTLDKELDESYSKLLNNKIHYYETHLSKCIKEQIQKISKKNSSKVKDAQKNKSPSIDIEKMLATQLSLDDLALFMTRFRLIKILHQRIKQKSKKIEGDTNNKTWLNNNDYSGYINDKTSKWNPSNIWNEVITKLPSCEKLNALIGQSKIVQNLTESFDLSICLIFGFDVSAMKAKKYGAREKTANANQTHSNIDYDTDDGNEKNAIDSKSNAIGAQTQSNKETTSDNEDLLIKEYEGMLGSSGDEGEGGGYLNPNINYNEVTDEEPSEASSDEDDSDERFSDSEENEPRRKKPKLHNLPELMAGYYSGNDTEEESDEDNKNVKGKKKKRDTAEDRTAREQMSNEPKRKNRRGQRARRKIWEKKYGSQAKHVQRELEKEMEDRKQRQIEYEARVAKREAKAASLEASRSREREDRRTETNNKKEKESASTGEEHPSWIAKRLAEEKLQKAKFEGKKIKFD.

The segment at 241-497 is disordered; the sequence is EKTANANQTH…STGEEHPSWI (257 aa). Polar residues predominate over residues 244–254; sequence ANANQTHSNID. Thr257 carries the phosphothreonine modification. A compositionally biased stretch (polar residues) spans 267 to 282; the sequence is DSKSNAIGAQTQSNKE. A compositionally biased stretch (acidic residues) spans 321–337; sequence VTDEEPSEASSDEDDSD. Positions 338-348 are enriched in basic and acidic residues; sequence ERFSDSEENEP. Ser367 is subject to Phosphoserine. Thr371 carries the post-translational modification Phosphothreonine. Phosphoserine is present on Ser375. A compositionally biased stretch (basic residues) spans 407–420; that stretch reads RKNRRGQRARRKIW. A coiled-coil region spans residues 426–470; the sequence is SQAKHVQRELEKEMEDRKQRQIEYEARVAKREAKAASLEASRSRE. Basic and acidic residues-rich tracts occupy residues 431-459 and 466-497; these read VQRELEKEMEDRKQRQIEYEARVAKREAK and SRSREREDRRTETNNKKEKESASTGEEHPSWI.

The protein belongs to the BUD22 family.

The protein resides in the nucleus. Involved in positioning the proximal bud pole signal. This Saccharomyces cerevisiae (strain ATCC 204508 / S288c) (Baker's yeast) protein is Bud site selection protein 22 (BUD22).